A 222-amino-acid chain; its full sequence is Alpha-S2-casein (222 aa).

An N-terminal signal peptide occupies residues 1–15 (MKFFIFTCLLAVALA). Phosphoserine is present on residues Ser-23, Ser-24, Ser-25, Ser-28, Ser-46, Ser-71, Ser-72, Ser-73, Ser-76, Ser-144, Ser-146, Ser-150, and Ser-158. Residues 76-140 (SAEVATEEVK…AVPITPTLNR (65 aa)) constitute a repeat. A repeat spans 158–222 (STEVFTKKTK…TKVIPYVRYL (65 aa)).

This sequence belongs to the alpha-casein family. As to expression, mammary gland specific. Secreted in milk.

It localises to the secreted. Its function is as follows. Important role in the capacity of milk to transport calcium phosphate. In terms of biological role, casocidin-I inhibits the growth of E.coli and S.carnosus. The chain is Alpha-S2-casein (CSN1S2) from Bos taurus (Bovine).